A 155-amino-acid polypeptide reads, in one-letter code: Rhombotin-1 (155 aa).

LIM zinc-binding domains are found at residues 21–83 and 85–147; these read KGCA…LFGT and GNCA…GQLN.

Its subcellular location is the nucleus. Its function is as follows. May be involved in gene regulation within neural lineage cells potentially by direct DNA binding or by binding to other transcription factors. This chain is Rhombotin-1, found in Danio rerio (Zebrafish).